A 28-amino-acid chain; its full sequence is Cytochrome c oxidase subunit 5B, mitochondrial (28 aa).

Belongs to the cytochrome c oxidase subunit 5B family. In terms of assembly, component of the cytochrome c oxidase (complex IV, CIV), a multisubunit enzyme composed of a catalytic core of 3 subunits and several supernumerary subunits. The complex exists as a monomer or a dimer and forms supercomplexes (SCs) in the inner mitochondrial membrane with ubiquinol-cytochrome c oxidoreductase (cytochrome b-c1 complex, complex III, CIII).

It is found in the mitochondrion inner membrane. It participates in energy metabolism; oxidative phosphorylation. Its function is as follows. Component of the cytochrome c oxidase, the last enzyme in the mitochondrial electron transport chain which drives oxidative phosphorylation. The respiratory chain contains 3 multisubunit complexes succinate dehydrogenase (complex II, CII), ubiquinol-cytochrome c oxidoreductase (cytochrome b-c1 complex, complex III, CIII) and cytochrome c oxidase (complex IV, CIV), that cooperate to transfer electrons derived from NADH and succinate to molecular oxygen, creating an electrochemical gradient over the inner membrane that drives transmembrane transport and the ATP synthase. Cytochrome c oxidase is the component of the respiratory chain that catalyzes the reduction of oxygen to water. Electrons originating from reduced cytochrome c in the intermembrane space (IMS) are transferred via the dinuclear copper A center (CU(A)) of subunit 2 and heme A of subunit 1 to the active site in subunit 1, a binuclear center (BNC) formed by heme A3 and copper B (CU(B)). The BNC reduces molecular oxygen to 2 water molecules using 4 electrons from cytochrome c in the IMS and 4 protons from the mitochondrial matrix. The sequence is that of Cytochrome c oxidase subunit 5B, mitochondrial from Solanum tuberosum (Potato).